We begin with the raw amino-acid sequence, 229 residues long: Cytochrome c oxidase subunit 2 (229 aa).

The Mitochondrial intermembrane segment spans residues 1-14 (MANPTHLGFQDAMS). A helical transmembrane segment spans residues 15-45 (PLMEELLYFHDHTLMILFLISSLVFYMIFAL). Residues 46–59 (LFPKLYYPNTSDVQ) are Mitochondrial matrix-facing. A helical transmembrane segment spans residues 60–87 (EVEVIWTVLPAIVLISIALPSLRTLYLM). Over 88–229 (DETNNPCLTI…QLWLEDSILS (142 aa)) the chain is Mitochondrial intermembrane. Cu cation-binding residues include His161, Cys196, Glu198, Cys200, His204, and Met207. Glu198 lines the Mg(2+) pocket.

The protein belongs to the cytochrome c oxidase subunit 2 family. As to quaternary structure, component of the cytochrome c oxidase (complex IV, CIV), a multisubunit enzyme composed of 14 subunits. The complex is composed of a catalytic core of 3 subunits MT-CO1, MT-CO2 and MT-CO3, encoded in the mitochondrial DNA, and 11 supernumerary subunits COX4I, COX5A, COX5B, COX6A, COX6B, COX6C, COX7A, COX7B, COX7C, COX8 and NDUFA4, which are encoded in the nuclear genome. The complex exists as a monomer or a dimer and forms supercomplexes (SCs) in the inner mitochondrial membrane with NADH-ubiquinone oxidoreductase (complex I, CI) and ubiquinol-cytochrome c oxidoreductase (cytochrome b-c1 complex, complex III, CIII), resulting in different assemblies (supercomplex SCI(1)III(2)IV(1) and megacomplex MCI(2)III(2)IV(2)). Found in a complex with TMEM177, COA6, COX18, COX20, SCO1 and SCO2. Interacts with TMEM177 in a COX20-dependent manner. Interacts with COX20. Interacts with COX16. Requires Cu cation as cofactor.

The protein localises to the mitochondrion inner membrane. The catalysed reaction is 4 Fe(II)-[cytochrome c] + O2 + 8 H(+)(in) = 4 Fe(III)-[cytochrome c] + 2 H2O + 4 H(+)(out). In terms of biological role, component of the cytochrome c oxidase, the last enzyme in the mitochondrial electron transport chain which drives oxidative phosphorylation. The respiratory chain contains 3 multisubunit complexes succinate dehydrogenase (complex II, CII), ubiquinol-cytochrome c oxidoreductase (cytochrome b-c1 complex, complex III, CIII) and cytochrome c oxidase (complex IV, CIV), that cooperate to transfer electrons derived from NADH and succinate to molecular oxygen, creating an electrochemical gradient over the inner membrane that drives transmembrane transport and the ATP synthase. Cytochrome c oxidase is the component of the respiratory chain that catalyzes the reduction of oxygen to water. Electrons originating from reduced cytochrome c in the intermembrane space (IMS) are transferred via the dinuclear copper A center (CU(A)) of subunit 2 and heme A of subunit 1 to the active site in subunit 1, a binuclear center (BNC) formed by heme A3 and copper B (CU(B)). The BNC reduces molecular oxygen to 2 water molecules using 4 electrons from cytochrome c in the IMS and 4 protons from the mitochondrial matrix. This chain is Cytochrome c oxidase subunit 2 (MT-CO2), found in Alligator mississippiensis (American alligator).